A 319-amino-acid chain; its full sequence is Homoserine dehydrogenase (319 aa).

NADPH-binding residues include phenylalanine 10, threonine 12, valine 13, arginine 40, lysine 57, serine 92, serine 93, serine 114, and lysine 116. Residue valine 13 coordinates NAD(+). NADP(+) is bound by residues valine 13 and arginine 40. Serine 92 is a binding site for NAD(+). Serine 92 is an NADP(+) binding site. Serine 114 and lysine 116 together coordinate NADP(+). Residues glutamate 140, valine 143, alanine 145, and threonine 147 each coordinate Na(+). The NADP(+) site is built by glycine 197 and glutamate 200. L-homoserine contacts are provided by glutamate 200 and aspartate 211. Lysine 215 (proton donor) is an active-site residue. Glycine 296 is an NADPH binding site. Residue glycine 296 coordinates NAD(+). Residue glycine 296 coordinates NADP(+).

This sequence belongs to the homoserine dehydrogenase family. Homodimer. It depends on a metal cation as a cofactor.

The enzyme catalyses L-homoserine + NAD(+) = L-aspartate 4-semialdehyde + NADH + H(+). It participates in amino-acid biosynthesis; L-methionine biosynthesis via de novo pathway; L-homoserine from L-aspartate: step 3/3. Its pathway is amino-acid biosynthesis; L-threonine biosynthesis; L-threonine from L-aspartate: step 3/5. Its function is as follows. Catalyzes the conversion of L-aspartate-beta-semialdehyde (L-Asa) to L-homoserine (L-Hse), the third step in the biosynthesis of threonine and methionine from aspartate. Utilizes NADH but not NADPH as coenzyme. In Pyrococcus horikoshii (strain ATCC 700860 / DSM 12428 / JCM 9974 / NBRC 100139 / OT-3), this protein is Homoserine dehydrogenase.